The primary structure comprises 232 residues: E3 ubiquitin-protein ligase RNF125 (232 aa).

Polar residues predominate over residues Met-1–Gly-10. The tract at residues Met-1–Asp-27 is disordered. Gly-2 carries N-myristoyl glycine lipidation. Positions 37 and 40 each coordinate Zn(2+). The RING-type zinc finger occupies Cys-37 to Arg-76. An interaction with the C2HC RNF-type zinc finger region spans residues Val-43–His-45. Residues Cys-52, His-54, Cys-57, Cys-60, Cys-72, Cys-75, Cys-100, and Cys-103 each coordinate Zn(2+). A C2HC RNF-type zinc finger spans residues Cys-100–Cys-119. Residues Leu-109 to Arg-113 are interaction with the RING-type zinc finger. 2 residues coordinate Zn(2+): His-115 and Cys-119. Residues Gln-120–Pro-128 are linker region. The tract at residues Glu-210 to Glu-224 is required for interaction with ubiquitin and for autoubiquitination.

As to quaternary structure, interacts with UBE2D1. Interacts with VCP/p97; leading to recruit RNF125 to RIGI and promote ubiquitination of RIGI. Post-translationally, autoubiquitinated, leading to its subsequent proteasomal degradation.

It is found in the golgi apparatus membrane. It carries out the reaction S-ubiquitinyl-[E2 ubiquitin-conjugating enzyme]-L-cysteine + [acceptor protein]-L-lysine = [E2 ubiquitin-conjugating enzyme]-L-cysteine + N(6)-ubiquitinyl-[acceptor protein]-L-lysine.. Its pathway is protein modification; protein ubiquitination. Functionally, E3 ubiquitin-protein ligase that mediates ubiquitination and subsequent proteasomal degradation of target proteins, such as RIGI, MAVS/IPS1, IFIH1/MDA5, JAK1 and p53/TP53. Acts as a negative regulator of type I interferon production by mediating ubiquitination of RIGI at 'Lys-181', leading to RIGI degradation. Mediates ubiquitination and subsequent degradation of p53/TP53. Mediates ubiquitination and subsequent degradation of JAK1. Acts as a positive regulator of T-cell activation. This chain is E3 ubiquitin-protein ligase RNF125 (RNF125), found in Macaca fascicularis (Crab-eating macaque).